Here is a 416-residue protein sequence, read N- to C-terminus: N-carbamoyl-L-amino-acid amidohydrolase (416 aa).

4 residues coordinate a divalent metal cation: H87, D98, E133, and H194. An N-carbamoyl-L-alpha-amino acid-binding residues include Q197, H230, N279, R292, and G361. Residues 213–331 form an involved in dimerization region; that stretch reads HCQGLWWLEF…SIEAVGHFDP (119 aa). H386 lines the a divalent metal cation pocket.

It belongs to the peptidase M20 family. In terms of assembly, homodimer. Requires Mn(2+) as cofactor. The cofactor is Ni(2+). Co(2+) is required as a cofactor. It depends on Fe(2+) as a cofactor.

The enzyme catalyses an N-carbamoyl-L-alpha-amino acid + H2O + 2 H(+) = an L-alpha-amino acid + NH4(+) + CO2. It catalyses the reaction N-carbamoyl-L-methionine + H2O + 2 H(+) = L-methionine + NH4(+) + CO2. The catalysed reaction is N-acetyl-L-methionine + H2O = L-methionine + acetate. It carries out the reaction N(alpha)-formyl-L-methionine + H2O = formate + L-methionine. The enzyme catalyses N-carbamoyl-L-alanine + H2O + 2 H(+) = L-alanine + NH4(+) + CO2. It catalyses the reaction N-carbamoyl-L-cysteine + H2O + 2 H(+) = L-cysteine + NH4(+) + CO2. The catalysed reaction is N-carbamoyl-L-tryptophan + H2O + 2 H(+) = L-tryptophan + NH4(+) + CO2. It carries out the reaction N-carbamoyl-L-valine + H2O + 2 H(+) = L-valine + NH4(+) + CO2. The enzyme catalyses N-carbamoyl-L-phenylalanine + H2O + 2 H(+) = L-phenylalanine + NH4(+) + CO2. With respect to regulation, strongly inhibited by Hg(2+), Cu(2+), Zn(2+), Pb(2+) and Fe(3+) ions, and slightly inhibited by Na(+) and K(+) ions. Beta-mercaptoethanol and 5,5'-dithiobis-(2-nitrobenzoic acid)(DTNB) cause 34% and 42% inhibition, respectively. Its function is as follows. Catalyzes the hydrolysis of both aliphatic and aromatic N-carbamoyl-L-alpha-amino acids to free L-alpha-amino acids. Is strictly L-specific since it is inactive toward N-carbamoyl-D-alpha-amino acids. Is also able to hydrolyze N-formyl-L-methionine and N-acetyl-L-methionine, but not ureidosuccinate or 3-ureidopropanoate. In Rhizobium meliloti (Ensifer meliloti), this protein is N-carbamoyl-L-amino-acid amidohydrolase.